Here is a 947-residue protein sequence, read N- to C-terminus: Valine--tRNA ligase (947 aa).

Residues 45–55 (PNVTGSLHMGH) carry the 'HIGH' region motif. Residues 591–595 (KMSKS) carry the 'KMSKS' region motif. Lys594 provides a ligand contact to ATP.

Belongs to the class-I aminoacyl-tRNA synthetase family. ValS type 1 subfamily. As to quaternary structure, monomer.

Its subcellular location is the cytoplasm. It carries out the reaction tRNA(Val) + L-valine + ATP = L-valyl-tRNA(Val) + AMP + diphosphate. In terms of biological role, catalyzes the attachment of valine to tRNA(Val). As ValRS can inadvertently accommodate and process structurally similar amino acids such as threonine, to avoid such errors, it has a 'posttransfer' editing activity that hydrolyzes mischarged Thr-tRNA(Val) in a tRNA-dependent manner. This is Valine--tRNA ligase from Rhizobium meliloti (strain 1021) (Ensifer meliloti).